A 231-amino-acid polypeptide reads, in one-letter code: Small ribosomal subunit protein uS3 (231 aa).

The 70-residue stretch at 17-86 (VEKYLTKELK…SPQIEVQQVQ (70 aa)) folds into the KH type-2 domain.

It belongs to the universal ribosomal protein uS3 family. As to quaternary structure, part of the 30S ribosomal subunit.

Functionally, binds the lower part of the 30S subunit head. This is Small ribosomal subunit protein uS3 from Methanoregula boonei (strain DSM 21154 / JCM 14090 / 6A8).